A 275-amino-acid polypeptide reads, in one-letter code: Mitochondrial outer membrane porin (275 aa).

The protein belongs to the eukaryotic mitochondrial porin (TC 1.B.8.1) family.

Its subcellular location is the mitochondrion outer membrane. Functionally, forms a channel through the cell membrane that allows diffusion of small hydrophilic molecules. The channel adopts an open conformation at low or zero membrane potential and a closed conformation at potentials above 30-40 mV. The open state has a weak anion selectivity whereas the closed state is cation-selective. The chain is Mitochondrial outer membrane porin (VDAC1) from Triticum aestivum (Wheat).